The chain runs to 401 residues: Phosrestin-1 (401 aa).

Belongs to the arrestin family.

Its function is as follows. Directly interacts with light-activated rhodopsin thereby activating the phosphorylation of metarhodopsin. Inhibits the dephosphorylation of metarhodopsin. The sequence is that of Phosrestin-1 (ARR2) from Calliphora vicina (Blue blowfly).